The primary structure comprises 506 residues: Glycerol kinase (506 aa).

Residue Thr-14 participates in ADP binding. Residues Thr-14, Thr-15, and Ser-16 each contribute to the ATP site. Thr-14 contacts sn-glycerol 3-phosphate. Arg-18 serves as a coordination point for ADP. Positions 84, 85, and 136 each coordinate sn-glycerol 3-phosphate. Arg-84, Glu-85, and Tyr-136 together coordinate glycerol. The residue at position 232 (His-232) is a Phosphohistidine; by HPr. Asp-246 contacts sn-glycerol 3-phosphate. Residues Asp-246 and Gln-247 each contribute to the glycerol site. The ADP site is built by Thr-268 and Gly-311. 4 residues coordinate ATP: Thr-268, Gly-311, Gln-315, and Gly-412. ADP is bound by residues Gly-412 and Asn-416.

The protein belongs to the FGGY kinase family. As to quaternary structure, homotetramer and homodimer (in equilibrium). In terms of processing, the phosphoenolpyruvate-dependent sugar phosphotransferase system (PTS), including enzyme I, and histidine-containing protein (HPr) are required for the phosphorylation of His-232, which leads to the activation of the enzyme.

It catalyses the reaction glycerol + ATP = sn-glycerol 3-phosphate + ADP + H(+). The protein operates within polyol metabolism; glycerol degradation via glycerol kinase pathway; sn-glycerol 3-phosphate from glycerol: step 1/1. With respect to regulation, activated by phosphorylation and inhibited by fructose 1,6-bisphosphate (FBP). In terms of biological role, key enzyme in the regulation of glycerol uptake and metabolism. Catalyzes the phosphorylation of glycerol to yield sn-glycerol 3-phosphate. This Enterococcus casseliflavus (Enterococcus flavescens) protein is Glycerol kinase.